The sequence spans 185 residues: Ribosome-recycling factor (185 aa).

Belongs to the RRF family.

The protein resides in the cytoplasm. Responsible for the release of ribosomes from messenger RNA at the termination of protein biosynthesis. May increase the efficiency of translation by recycling ribosomes from one round of translation to another. The protein is Ribosome-recycling factor of Chromohalobacter salexigens (strain ATCC BAA-138 / DSM 3043 / CIP 106854 / NCIMB 13768 / 1H11).